The sequence spans 155 residues: Lectin-like protein EP153R (155 aa).

Residues 1–30 (MYFKKKYIGLIDKNCEKKILDDCTTIKICY) are Cytoplasmic-facing. Residues 31–51 (ILIGILIGTNMITLIYNFIFW) form a helical membrane-spanning segment. Residues 52-155 (DHYMTCNKKD…YLPLLFICSK (104 aa)) are Extracellular-facing. Residues cysteine 66 and cysteine 77 are joined by a disulfide bond. A lectin-like region spans residues 66-154 (CPKDWVGYNN…KYLPLLFICS (89 aa)). Asparagine 82, asparagine 86, asparagine 98, asparagine 104, asparagine 110, asparagine 124, asparagine 130, and asparagine 137 each carry an N-linked (GlcNAc...) asparagine; by host glycan. Cysteine 94 and cysteine 153 are oxidised to a cystine.

This sequence belongs to the asfivirus lectin-like protein family. Homodimer.

The protein localises to the host endoplasmic reticulum membrane. Functionally, down-regulates MHC-I expression by impairing the appropriate configuration or presentation into the plasma membrane of the latter. Participates in viral hemadsorption, which may help viral spread. Reduces the transactivating activity of host TP53, thus inhibiting apoptosis. Non-essential for virus growth in swine macrophage cell cultures. The protein is Lectin-like protein EP153R of Ornithodoros (relapsing fever ticks).